The chain runs to 167 residues: Signal peptidase complex catalytic subunit SEC11 (167 aa).

Residues 1-9 (MNLRFELQK) lie on the Cytoplasmic side of the membrane. A helical; Signal-anchor for type II membrane protein transmembrane segment spans residues 10-30 (LLNVCFLFASAYMFWQGLAIA). Residues 31–167 (TNSASPIVVV…LGLSALLGGE (137 aa)) lie on the Lumenal side of the membrane. Residues serine 44, histidine 83, and aspartate 109 each act as charge relay system in the active site. The N-linked (GlcNAc...) asparagine glycan is linked to asparagine 121. The interval 153–164 (ALLGMLGLSALL) is C-terminal short (CTS) helix.

This sequence belongs to the peptidase S26B family. In terms of assembly, component of the signal peptidase complex (SPC) composed of a catalytic subunit SEC11 and three accessory subunits SPC1, SPC2 and SPC3. The complex induces a local thinning of the ER membrane which is used to measure the length of the signal peptide (SP) h-region of protein substrates. This ensures the selectivity of the complex towards h-regions shorter than 18-20 amino acids. SPC associates with the translocon complex.

The protein resides in the endoplasmic reticulum membrane. The enzyme catalyses Cleavage of hydrophobic, N-terminal signal or leader sequences from secreted and periplasmic proteins.. Its function is as follows. Catalytic component of the signal peptidase complex (SPC) which catalyzes the cleavage of N-terminal signal sequences from nascent proteins as they are translocated into the lumen of the endoplasmic reticulum. Specifically cleaves N-terminal signal peptides that contain a hydrophobic alpha-helix (h-region) shorter than 18-20 amino acids. In Saccharomyces cerevisiae (strain Lalvin QA23) (Baker's yeast), this protein is Signal peptidase complex catalytic subunit SEC11 (SEC11).